The following is an 852-amino-acid chain: Chitin synthase 1 (852 aa).

Disordered stretches follow at residues 27-46 (EDQD…TNYA) and 53-97 (SSLR…QANG). The segment covering 53-74 (SSLRSQKSANKPTTAQNRNSAA) has biased composition (polar residues). 7 consecutive transmembrane segments (helical) span residues 492 to 509 (RWLN…IHFR), 532 to 552 (VISL…FYFI), 572 to 592 (IFDF…ICSM), 601 to 621 (FLFM…LFCS), 686 to 706 (FLPY…YAFC), 787 to 807 (THLV…ITTS), and 830 to 850 (CGLG…GIFT).

This sequence belongs to the chitin synthase family. Class II subfamily.

The protein localises to the cell membrane. It catalyses the reaction [(1-&gt;4)-N-acetyl-beta-D-glucosaminyl](n) + UDP-N-acetyl-alpha-D-glucosamine = [(1-&gt;4)-N-acetyl-beta-D-glucosaminyl](n+1) + UDP + H(+). Functionally, polymerizes chitin, a structural polymer of the cell wall and septum, by transferring the sugar moiety of UDP-GlcNAc to the non-reducing end of the growing chitin polymer. The chain is Chitin synthase 1 (CHS1) from Mucor circinelloides f. lusitanicus (Mucor racemosus var. lusitanicus).